The following is a 1141-amino-acid chain: Collagen alpha-1(XXVIII) chain (1141 aa).

An N-terminal signal peptide occupies residues Met1–Ala20. The region spanning Asp48–Leu227 is the VWFA 1 domain. The segment at Cys242–Asp770 is disordered. Collagen-like domains follow at residues Glu243–Cys300, Gly301–Gly358, Gly501–Lys544, Gly545–Ala588, and Gly733–Gly769. The segment covering Lys291 to Pro311 has biased composition (basic and acidic residues). A compositionally biased stretch (low complexity) spans Pro335–Glu344. Pro residues predominate over residues Pro345–Ala356. Positions Lys735 to Thr753 are enriched in basic and acidic residues. The region spanning Glu798–Leu976 is the VWFA 2 domain. A BPTI/Kunitz inhibitor domain is found at Cys1088 to Cys1138. 3 disulfide bridges follow: Cys1088–Cys1138, Cys1097–Cys1121, and Cys1113–Cys1134.

This sequence belongs to the VWA-containing collagen family. As to quaternary structure, trimer or homomer. Secreted into as a 135 kDa monomer under reducing conditions and as a homotrimer under non-reducing conditions. Expressed in skin, intestine, sternum, brain and kidney. Lower expression is also observed in heart, lung, sciatic nerve, dorsal root ganglia, peripheral nerves and calvaria of newborn mice and in intestine and brain of adult mice. Found in basement membrane surrounding a particular subset of Schwann cells in adult sciatic nerve.

It localises to the secreted. Its subcellular location is the extracellular space. The protein localises to the extracellular matrix. It is found in the basement membrane. May act as a cell-binding protein. This chain is Collagen alpha-1(XXVIII) chain (Col28a1), found in Mus musculus (Mouse).